The sequence spans 535 residues: Cytochrome c oxidase subunit 1 (535 aa).

The helical transmembrane segment at 17–37 threads the bilayer; that stretch reads ILYFIFAIFSGVIGSTMSLII. Ca(2+) is bound by residues glutamate 40, alanine 43, and glycine 45. A run of 6 helical transmembrane segments spans residues 58–78, 104–124, 147–167, 184–204, 236–256, and 268–288; these read VLVV…GLVG, FWLL…ESWA, LGIF…INFI, PLFV…LPVL, LFWF…FGII, and VFGE…GFLV. Position 63 (histidine 63) interacts with Fe(II)-heme a. Histidine 242 contacts Cu cation. The segment at residues 242-246 is a cross-link (1'-histidyl-3'-tyrosine (His-Tyr)); the sequence is HPEVY. Residue tyrosine 246 participates in O2 binding. Cu cation is bound by residues histidine 291 and histidine 292. Helical transmembrane passes span 311 to 331 and 339 to 359; these read MVIA…LYGG and MLYA…GVAL. Residues histidine 369 and aspartate 370 each contribute to the Mg(2+) site. 2 consecutive transmembrane segments (helical) span residues 373–393 and 413–433; these read YVVG…LFAG and IQFW…HFLG. Histidine 377 contributes to the heme a3 binding site. Histidine 379 is a Fe(II)-heme a binding site. Residue proline 442 participates in Ca(2+) binding. The helical transmembrane segment at 453–473 threads the bilayer; it reads YVSSIGSVIAIISLALFIYII.

It belongs to the heme-copper respiratory oxidase family. As to quaternary structure, component of the cytochrome c oxidase (complex IV, CIV), a multisubunit enzyme composed of a catalytic core of 3 subunits and several supernumerary subunits. The complex exists as a monomer or a dimer and forms supercomplexes (SCs) in the inner mitochondrial membrane with ubiquinol-cytochrome c oxidoreductase (cytochrome b-c1 complex, complex III, CIII). The cofactor is heme. Cu cation is required as a cofactor.

The protein localises to the mitochondrion inner membrane. The enzyme catalyses 4 Fe(II)-[cytochrome c] + O2 + 8 H(+)(in) = 4 Fe(III)-[cytochrome c] + 2 H2O + 4 H(+)(out). It participates in energy metabolism; oxidative phosphorylation. Functionally, component of the cytochrome c oxidase, the last enzyme in the mitochondrial electron transport chain which drives oxidative phosphorylation. The respiratory chain contains 3 multisubunit complexes succinate dehydrogenase (complex II, CII), ubiquinol-cytochrome c oxidoreductase (cytochrome b-c1 complex, complex III, CIII) and cytochrome c oxidase (complex IV, CIV), that cooperate to transfer electrons derived from NADH and succinate to molecular oxygen, creating an electrochemical gradient over the inner membrane that drives transmembrane transport and the ATP synthase. Cytochrome c oxidase is the component of the respiratory chain that catalyzes the reduction of oxygen to water. Electrons originating from reduced cytochrome c in the intermembrane space (IMS) are transferred via the dinuclear copper A center (CU(A)) of subunit 2 and heme A of subunit 1 to the active site in subunit 1, a binuclear center (BNC) formed by heme A3 and copper B (CU(B)). The BNC reduces molecular oxygen to 2 water molecules using 4 electrons from cytochrome c in the IMS and 4 protons from the mitochondrial matrix. The sequence is that of Cytochrome c oxidase subunit 1 (COX1) from Wickerhamomyces canadensis (Yeast).